A 291-amino-acid chain; its full sequence is 5'-3' exonuclease (291 aa).

The 5'-3' exonuclease domain occupies 176-269 (TPKQVIEYKG…VHAALKPIDK (94 aa)).

Its function is as follows. 5'-3' exonuclease acting preferentially on double-stranded DNA. The chain is 5'-3' exonuclease (polA) from Mycoplasma pneumoniae (strain ATCC 29342 / M129 / Subtype 1) (Mycoplasmoides pneumoniae).